Consider the following 102-residue polypeptide: MAKKSMIERNLRRIKLCDQYKEKREKLKSIINNKNLSIVERFTAQNKLIKKLPRNSSKTKIRNRCALTGRPRGVYRKFGLCRIVLRDLCSFGQIPGVTKSSW.

Belongs to the universal ribosomal protein uS14 family. As to quaternary structure, part of the 30S ribosomal subunit. Contacts proteins S3 and S10.

Binds 16S rRNA, required for the assembly of 30S particles and may also be responsible for determining the conformation of the 16S rRNA at the A site. The polypeptide is Small ribosomal subunit protein uS14 (Wolbachia pipientis wMel).